The primary structure comprises 304 residues: Glutaminase (304 aa).

7 residues coordinate substrate: Ser-61, Asn-113, Glu-158, Asn-165, Tyr-189, Tyr-240, and Val-258.

The protein belongs to the glutaminase family. In terms of assembly, homotetramer.

The catalysed reaction is L-glutamine + H2O = L-glutamate + NH4(+). In Fusobacterium nucleatum subsp. nucleatum (strain ATCC 25586 / DSM 15643 / BCRC 10681 / CIP 101130 / JCM 8532 / KCTC 2640 / LMG 13131 / VPI 4355), this protein is Glutaminase.